The sequence spans 573 residues: FAD-dependent monooxygenase resA (573 aa).

The first 17 residues, 1–17 (MYDVIVIGAGWCGLVAA), serve as a signal peptide directing secretion. I106 contributes to the FAD binding site. Residue N235 is glycosylated (N-linked (GlcNAc...) asparagine).

This sequence belongs to the FAD-binding monooxygenase family. It depends on FAD as a cofactor.

The protein operates within antifungal biosynthesis. Its function is as follows. FAD-dependent monooxygenase; part of the gene cluster that mediates the biosynthesis of the tetrahydropyranyl antifungal agent restricticin that acts as an inhibitor of CYP51 and blocks the ergosterol biosynthesis. The highly reducing polyketide synthase resH, the short chain dehydrogenase resG, the cyclase resF, the FAD-dependent monooxygenase resA and the enoylreductase resD are required to generate the first stable intermediate desmethylrestrictinol. ResH with resD biosynthesize the first polyketide chain intermediate that is reduced by resG, followed by epoxidation by resA before 6-endo cyclization via epoxide opening by resF leads to desmethylrestrictinol. The methyltransferase resE then catalyzes the C4 O-methylation of desmethylrestrictinol to produce restrictinol, and the nonribosomal peptide synthetase resC catalyzes the C3 esterification of restrictinol with glycine that leads to restricticin. The chain is FAD-dependent monooxygenase resA from Aspergillus sclerotiorum.